The primary structure comprises 535 residues: CTP synthase (535 aa).

The interval 1–268 (MSTKYIFVTG…DQIVCDHLKL (268 aa)) is amidoligase domain. A CTP-binding site is contributed by S14. S14 contacts UTP. ATP is bound at residue 15–20 (SMGKGI). Position 55 (Y55) interacts with L-glutamine. D72 provides a ligand contact to ATP. 2 residues coordinate Mg(2+): D72 and E142. Residues 149-151 (DME), 189-194 (KTKIAQ), and K225 each bind CTP. Residues 189–194 (KTKIAQ) and K225 each bind UTP. ATP is bound at residue V243. In terms of domain architecture, Glutamine amidotransferase type-1 spans 293-535 (KIALVGKYVE…FIRVAVENSK (243 aa)). L-glutamine is bound at residue G355. The active-site Nucleophile; for glutamine hydrolysis is C382. Residues 383–386 (LGMQ), E406, and R464 each bind L-glutamine. Residues H509 and E511 contribute to the active site.

Belongs to the CTP synthase family. Homotetramer. In contrast to E.coli CTP synthase, remains a tetramer at dilute enzyme concentrations even in the absence of Mg(2+), ATP and UTP.

It catalyses the reaction UTP + L-glutamine + ATP + H2O = CTP + L-glutamate + ADP + phosphate + 2 H(+). The enzyme catalyses L-glutamine + H2O = L-glutamate + NH4(+). It carries out the reaction UTP + NH4(+) + ATP = CTP + ADP + phosphate + 2 H(+). It functions in the pathway pyrimidine metabolism; CTP biosynthesis via de novo pathway; CTP from UDP: step 2/2. Its activity is regulated as follows. Allosterically activated by GTP, when glutamine is the substrate. GTP has no effect on the reaction when ammonia is the substrate. The allosteric effector GTP functions by stabilizing the protein conformation that binds the tetrahedral intermediate(s) formed during glutamine hydrolysis. Also activated by magnesium. Allosterically inhibited by CTP. Catalyzes the ATP-dependent amination of UTP to CTP with either L-glutamine or ammonia as the source of nitrogen. Is essential for the synthesis of CTP de novo. Contrary to other bacterial CTP synthases, the lactococcal enzyme is also able to convert dUTP to dCTP, but this reaction may not play a significant physiological role. Regulates intracellular CTP levels through interactions with the four ribonucleotide triphosphates. This chain is CTP synthase, found in Lactococcus lactis subsp. cremoris (strain MG1363).